The following is a 970-amino-acid chain: uncharacterized protein (970 aa).

The disordered stretch occupies residues 942–970; that stretch reads QLSFEEDGWTESEPRPVRREAHVRAKERH. Positions 953-970 are enriched in basic and acidic residues; that stretch reads SEPRPVRREAHVRAKERH.

This is an uncharacterized protein from Frog virus 3 (isolate Goorha) (FV-3).